The following is a 156-amino-acid chain: 6,7-dimethyl-8-ribityllumazine synthase (156 aa).

5-amino-6-(D-ribitylamino)uracil contacts are provided by residues Phe-25, 59 to 61 (AFE), and 83 to 85 (AVI). Position 88-89 (88-89 (AT)) interacts with (2S)-2-hydroxy-3-oxobutyl phosphate. The active-site Proton donor is the His-91. Phe-116 lines the 5-amino-6-(D-ribitylamino)uracil pocket. Arg-130 is a (2S)-2-hydroxy-3-oxobutyl phosphate binding site.

Belongs to the DMRL synthase family.

It catalyses the reaction (2S)-2-hydroxy-3-oxobutyl phosphate + 5-amino-6-(D-ribitylamino)uracil = 6,7-dimethyl-8-(1-D-ribityl)lumazine + phosphate + 2 H2O + H(+). The protein operates within cofactor biosynthesis; riboflavin biosynthesis; riboflavin from 2-hydroxy-3-oxobutyl phosphate and 5-amino-6-(D-ribitylamino)uracil: step 1/2. Its function is as follows. Catalyzes the formation of 6,7-dimethyl-8-ribityllumazine by condensation of 5-amino-6-(D-ribitylamino)uracil with 3,4-dihydroxy-2-butanone 4-phosphate. This is the penultimate step in the biosynthesis of riboflavin. The polypeptide is 6,7-dimethyl-8-ribityllumazine synthase (Nitratidesulfovibrio vulgaris (strain DSM 19637 / Miyazaki F) (Desulfovibrio vulgaris)).